Here is a 159-residue protein sequence, read N- to C-terminus: Cystatin-9 (159 aa).

The signal sequence occupies residues 1–28 (MSSPQRRKAMPWALSLLLMGFQLLVTYA).

Belongs to the cystatin family. As to expression, expressed in heart, placenta, lung, liver, skeletal muscle and pancreas. Not expressed in brain. Expressed in epididymis, kidney, testis, spinal cord, and thymus with a strong expression in epididymis and kidney and a weak expression in the spinal cord and thymus.

It is found in the secreted. May be involved in testis development. May play a role in hematopoietic differentiation or inflammation. Has immunomodulatory and antimicrobial functions against Francisella tularensis, a Gram-negative bacteria. In Homo sapiens (Human), this protein is Cystatin-9 (CST9).